The chain runs to 101 residues: MGFYGNLNHMEKGKSGYVTHKQLDKKLEVFKQELLVEFDQRYVTKAEFKEFQIEVREGFRIQGEAMNARMDRFESLVLKSLESINNTLIDFGKRIDKLESK.

It belongs to the UPF0134 family.

This Mycoplasma pneumoniae (strain ATCC 29342 / M129 / Subtype 1) (Mycoplasmoides pneumoniae) protein is UPF0134 protein MPN_675.